The primary structure comprises 3987 residues: MAPQNEPIAIVGSGCRFPGEASSPSKLWDLLREPRDVLSKIDRFSADGFYNKDGHHHGSSNVLHSYQLSEDTRSFDAQFFNIPASEAESMDPQQRFIMEVVYEALESAAIKIEELSGSPTAVYVGVMCNDYAHITYADLESVPKYAATGTALSILANRISYFFNWTGPSMTIDTACSSSLVALHHAVQTLRGGTSKVAVAAGTNLIFTPTNYIAESNVNMLSPTGRSRMWDANADGYARGEGVAAVVLKTLSQAVADGDRIECVIRETGLNQDGRTPGITMPSSVAQAELIRSTYARAGLDVTRESDRPQFFEAHGTGTKAGDPEEAKAIYKAFFGQEDTMDARDTLYVGSIKTIIGHTEGTAGLAGLLKASLAVQNKTLPPNMHFHTLNPDIEPYYGKLQILTSVKPWPALASGVPRRVSVNSFGFGGANAHAIVESYEPSNGAIKVQSSKETAIPFTFSGYSEKSLMSQLTSFLEYLDSHPEPRLRDSAWTLSRRSAFSTRTTVSGTSIERLQEKLQSKIDSKIKDGKALGIRSSSKNDKILGVFTGQGAQWPRMGLRLLQSSATARRIFDDLERSLAELPTEDRPSWSLVQELEREAEDSRVMEAEFSQVLCTAVQVMLVDLLHSVGVSFDIVVGHSSGEIGAAYSAGYLSARDAIRIAYYRGKFGKLACGRDGVAGGMLAAGTDMADAKDLCELDDFVGRLQLAASNSSSSVTLSGDAEAVAWAQFVLEDEKKFARLLKVDTAYHSYHMQPCAEPYIEAMKRAGIQALKPQSDCRWFSSVLEGQEVSAAMSASLANSYWRDNLLQPVMFSQALEQAVSNTSDIGLVLEVGPHAALRGPATLTINDKLGRDVPYFGLLSRNADDVESFSDGIGAVWASLARCVIDFTRVDALLADGPEDQPRLCDNVPGYSWDHQRTYWMESRSSAALRLRPAAHHELLGVRVDSLNREYRWRNFIKPSQLSWTRGHQVQSQLIFPGAGFSVMALEAAKALAPAEKIALVELTDMQVLRAMAFQDENTAVEVICSLSNVIEDPDQANLTANFTCDMCLSKESGFVMAACGAVRLQLGAASSQLLPERTACPVRMNDVNIEHFYSTLWSLGYNYTDMFRSITSLQRTTDAASGIIHTTTEPDYTTSLTLHPATLDVAFQGIFGAMGAPGDGRLWTVLVPTRIKRITINPAVCGGTSGLGVDLPFDASVSVSPIDGVAGDVDIFDSTGVNKAVQVEGLQVAPLVPVTQSDDREVFSDTIWNFQEPDAARDVPKWTLTDEEWEHARYVERACFYYLKQLHDTITAEERDRCEWHPRKMLDWATEVVGVVSRGEHPIIRQEWMNDTWEMLKGPLDELTAKYEDFESLTHVGKNLIPFVKGEFSLLELVRNGGLLEHIYRNTYAFCEYNNYLANLVKQLSHRFPRMDIFEIGAGTGSTTEAVLRGIGDHYSSYTYTDLSAGFFPNAQETFKEHDAKMIYKIYDAEKEPGKQGYTERTYDLVIASNVLHATHSLETTLTNARKLLKPGGYLVMLEVTDVNPLRPTFFFGCLPGWWVGENDGRPHHPLVTKERWGELFDRTGFSGLDTSTPSHDVFMAPFSVMLTQAVDRQMALIRQPLQEDNRTTIDHLLILGGTGFTSFMLIEDVKHQLKRYAKHVIVVETLEALEASHFHSRQMLLSLVELDAPVFSPFTPERFAALQMLTEKCRNVLWVVRGASGEQPYANMMNGVARCLVGEQPDMRFQFVDFDMADKVDAGFIVRSLLQLQISDAWHTFIEPYRPVWTLEREVRYIQGQAHIPRYSPSLRRNLQYNSWRRTIRETVDPSSKYVILTHANGYYDLEEDNSPRPDPMAEDDRMAINVSRSSTVAVEIDGIGHLYILTGECELSGQRVLAFSSHNASRVQVKKDWVVSIGILSSDEPALIQMVTNVCLGTMLLNQTPRNGSLLVYEPTVALARILTALTSAEEPGRVLFTTTNRAKLDSGVAFSFIHPSSPDSSIARWVPAGVAGFVDASGGRKEQNMAARFARHLSSQCRVISMEGFYSNSSHQWGNAGGNSLSALLQHSTGLFTQGYKQCKQNQVQELSLDDVIGASTEHKEIRILNWKSQSKALVKLSPVQDEITFKGDRTYLLVGLTGELGRSLCRWMVQRGARYVVLTSRKPDVEPAWLELMQSYGAHIEVMAMDATDRKSTYNTVRKVQQTLPPVAGVGNGAMVLNDGLFNVISHQDFNQTLRPKVDGTTYLNELFQSPDLDFFIVFSSLAYVTGNFGQTSYAAANAFMASLVEGRKRRGLPGSVMNLAGIFGLGYITRTDRSILERLGKLGYANISEYDFHQFFAEAVLSGVPGSGRCHEISSALRPIDPDGETNPPAWLDMPRLSYYRHTKHAFTESGDTKSLSVRSQLKEQTTMEDVQRVLTNGLILTLYKQLGLDPEDDAISPDTSLVELGIDSLVAVDMRVWFTKELDLDMPVLKLLGGATVAAMVEDTMERMSPDLIPNVAQKDVTVAADRPSAPSDGVPAVGRSTAVSTTEHNSEEQESHAMETQELDESTTSGGECSSTKESSSSEATPPPSSVMSEDLAKVEETASIDGPKYVRKVKMGYGSLQFFFLVKHLDDPTVLNMQFRLPLQGSIKIPDLKYAVKMLGQRHEALRTAFFVDAENDDEPTQGVLETSPLQLETMQVTDSKEARRVCEDVQKYVFNIESGETIRILLLSITPSSHWLVLSFHHISIDGFSFNILLDEINALYQGQHLPPVKTQFTDVMCKQRQDLQAGFRRSELAYWQQVLGKIPDPIPLFPVAKLSSRLPVTRYHFEEAPMASIDAATAEQIRKQCRALKATRFHFFMTVLRIFLFAFLDTDELCIGFADASRADSGVSRTVGYLVNMLSLKFQRKPSQTFAQKVEEARKQSYAALANSTVPFNALLEKLEPPRSAAYTPVFQVFMDYLQHKFTAPKGLGVVEEQVYAHLTHNFFDLAVDINDVSASEILVRFRMQQYLYSASSVSLLLKSYVQLVKMCAYMEPNKAIGEPVPYDAQDIERAISLGQGPVVSSQWPSTPIERILDVAQARPEAPALVDGEGARLSYMEMIDRAHSIAGCLLTAGVAEGSTVGVYQEPTADSICSLLAIWIIGAVYLPLDRRVPCSRLSSIVQDCQPSAILCHERTLSDTPYLEATKQTAIITVPVNVAGIEAAPVPLNTGNGDQTSIILYTSGSTGVPKGLPIRHVSLLNQIEAMTTTFGVGAEMVLQQSAPSFDVSMQQILMALCNGGALYVVPNETRLDPVTITRLIASEKITWVHATPSEFTQWLRHGSAHLRAAKDWKFAFSSGEALSSDLVKGFEALRRPDVKLINVYGPAEAGVITGTEIDTTHVSAEPRSPISLGSPLANIAVYVVDRNLRPVPVGVSGEIVVAGAGNISGYLNRFELTAKLFLPDTITPRGYYPGQLATLYRSGDIGRYSPDGQLYYEGRIAGDTQVKLNGIRIDLKDVESAILETSGGEIVNAIVTDRRSPDFLVAHVELKADFPEAERKNFLTYIQQCLPLPKYMCPAMFIPLDHVPLNSHGKLDRRAIAARPLPTVDGDDQQGDADLSETELALRELWTGCLPEDVVKLTSISATTDFFHLGGNSYLLVRLQRLIRDRFNVSVPVMALYDASTLMAMALKIRNSQSLAVIDWDTETSVAQSLGASPCAEQPTAPRKTTDLTVVLTGATGYLGSRIMKALIASEQVSQIHCVAVRGHSAGVPRELAHSSDKLILHGGHLEDPLLGMSEEEFTFVARETDLVIHSGANRSFWDHYERLRGPNVLSTKTLVDLALQNQAPLHFISSGGVHLLCSGEDYAAESLASYLPPTDGSNGYIASKWASEVYLEKAAQKTSLPVYVHRLTPAPDVTPDAPMELLEEMSALAVKLQALPAPSGWTGTFDLTPAEALATGIAAAAVGAQAPMLESHQSARFIHHPSQVKMTMDHVAKYLDMLPSAEGFERLPPLQWAGRAKREGLTWHFSSTDFITMGG.

Positions 5 to 438 (NEPIAIVGSG…GANAHAIVES (434 aa)) constitute a Ketosynthase family 3 (KS3) domain. Active-site for beta-ketoacyl synthase activity residues include Cys176, His315, and His358. The tract at residues 546-872 (VFTGQGAQWP…RNADDVESFS (327 aa)) is malonyl-CoA:ACP transacylase (MAT) domain. The N-terminal hotdog fold stretch occupies residues 939–1072 (HELLGVRVDS…GAVRLQLGAA (134 aa)). The PKS/mFAS DH domain occupies 939 to 1240 (HELLGVRVDS…VAPLVPVTQS (302 aa)). The segment at 940–1238 (ELLGVRVDSL…LQVAPLVPVT (299 aa)) is dehydratase (DH) domain. The Proton acceptor; for dehydratase activity role is filled by His970. The interval 1087 to 1240 (MNDVNIEHFY…VAPLVPVTQS (154 aa)) is C-terminal hotdog fold. Catalysis depends on Asp1147, which acts as the Proton donor; for dehydratase activity. The tract at residues 1399-1583 (YLANLVKQLS…TSTPSHDVFM (185 aa)) is methyltransferase (MT) domain. The segment at 2113–2285 (TYLLVGLTGE…LPGSVMNLAG (173 aa)) is ketoreductase (KR) domain. The 77-residue stretch at 2397–2473 (RVLTNGLILT…AMVEDTMERM (77 aa)) folds into the Carrier 1 domain. Ser2433 carries the post-translational modification O-(pantetheine 4'-phosphoryl)serine. The disordered stretch occupies residues 2489–2561 (AADRPSAPSD…PPPSSVMSED (73 aa)). The segment covering 2514 to 2525 (HNSEEQESHAME) has biased composition (basic and acidic residues). A compositionally biased stretch (low complexity) spans 2532-2550 (STTSGGECSSTKESSSSEA). A condensation (C) domain region spans residues 2582-3001 (MGYGSLQFFF…QLVKMCAYME (420 aa)). An adenylation (A) (KR) domain region spans residues 3042–3448 (LDVAQARPEA…GQLYYEGRIA (407 aa)). The Carrier 2 domain occupies 3564 to 3644 (ADLSETELAL…AMALKIRNSQ (81 aa)). Ser3604 carries the post-translational modification O-(pantetheine 4'-phosphoryl)serine. Positions 3680–3916 (TVVLTGATGY…TGIAAAAVGA (237 aa)) are reductase (R) domain.

It in the C-terminal section; belongs to the NRP synthetase family.

It participates in mycotoxin biosynthesis. Its function is as follows. Hybrid PKS-NRPS synthetase; part of the gene cluster that mediates the biosynthesis of burnettramic acids, an unusual class of bolaamphiphilic pyrrolizidinediones that display potent antibacterial, antifungal, and cytotoxic activities. The first step of the biosynthesis of burnettramic acids is the hydroxylation of proline by the proline hydroxylase buaE to generate 4-hydroxyproline. The PKS-NRPS buaA and trans-enoyl reductase buaC construct the highly reduced polyketide chain, and the condensation (C) domain of buaA then catalyzes the amide bond formation with the activated 4-hydroxyproline. This is followed by the R domain releasing the nascent polyketide-peptide directly via a Dieckmann condensation to afford a tetramic acid fused to the hydroxyproline, generating the bicyclic pyrrolidinedione moiety. The cytochrome P450 monooxygenases buaD and buaG are likely responsible for the multiple hydroxylations on the polyketide chain and its terminus, although in a heterologous context, buaD does not appear to be required. Therefore, while buaG may be a multifunctional cytochrome P450 monooxygenase, it cannot be ruled out that the two secondary alcohols on the polyketide chain could have an acetate origin. Finally, the glycosyltransferase buaB transfers beta-D-mannose to the aglycone burnettramic acid A to form burnettramic acid A. Burnettramic acid B is a minor cis-pyrrolizidine epimer of burnettramic acid A and it is likely that small amounts of it form naturally in acidic environments. In Petromyces alliaceus (Aspergillus alliaceus), this protein is Hybrid PKS-NRPS synthetase buaA.